A 413-amino-acid polypeptide reads, in one-letter code: Aspartate aminotransferase, cytoplasmic (413 aa).

Positions 39 and 141 each coordinate L-aspartate. At S149 the chain carries Phosphoserine. Residue N195 participates in L-aspartate binding. K259 carries the post-translational modification N6-(pyridoxal phosphate)lysine. Residue R387 participates in L-aspartate binding.

It belongs to the class-I pyridoxal-phosphate-dependent aminotransferase family. Homodimer. It depends on pyridoxal 5'-phosphate as a cofactor.

It is found in the cytoplasm. The catalysed reaction is L-aspartate + 2-oxoglutarate = oxaloacetate + L-glutamate. The enzyme catalyses L-cysteine + 2-oxoglutarate = 2-oxo-3-sulfanylpropanoate + L-glutamate. It catalyses the reaction (2S)-2-aminobutanoate + 2-oxoglutarate = 2-oxobutanoate + L-glutamate. It carries out the reaction 3-sulfino-L-alanine + 2-oxoglutarate = 3-sulfinopyruvate + L-glutamate. Functionally, biosynthesis of L-glutamate from L-aspartate or L-cysteine. Important regulator of levels of glutamate, the major excitatory neurotransmitter of the vertebrate central nervous system. Acts as a scavenger of glutamate in brain neuroprotection. The aspartate aminotransferase activity is involved in hepatic glucose synthesis during development and in adipocyte glyceroneogenesis. Using L-cysteine as substrate, regulates levels of mercaptopyruvate, an important source of hydrogen sulfide. Mercaptopyruvate is converted into H(2)S via the action of 3-mercaptopyruvate sulfurtransferase (3MST). Hydrogen sulfide is an important synaptic modulator and neuroprotectant in the brain. The chain is Aspartate aminotransferase, cytoplasmic from Pongo abelii (Sumatran orangutan).